A 398-amino-acid polypeptide reads, in one-letter code: 2,3-bisphosphoglycerate-independent phosphoglycerate mutase (398 aa).

Belongs to the BPG-independent phosphoglycerate mutase family. A-PGAM subfamily.

The catalysed reaction is (2R)-2-phosphoglycerate = (2R)-3-phosphoglycerate. It participates in carbohydrate degradation; glycolysis; pyruvate from D-glyceraldehyde 3-phosphate: step 3/5. Functionally, catalyzes the interconversion of 2-phosphoglycerate and 3-phosphoglycerate. The protein is 2,3-bisphosphoglycerate-independent phosphoglycerate mutase of Methanosarcina barkeri (strain Fusaro / DSM 804).